An 886-amino-acid chain; its full sequence is Valine--tRNA ligase (886 aa).

Positions 53–63 (PNVTGSLHMGH) match the 'HIGH' region motif. The 'KMSKS' region motif lies at 540-544 (KMSKS). An ATP-binding site is contributed by lysine 543. The stretch at 819-851 (TIDVAAERRRLEKELAGAQKELASTAAKLANAD) forms a coiled coil.

It belongs to the class-I aminoacyl-tRNA synthetase family. ValS type 1 subfamily. In terms of assembly, monomer.

It is found in the cytoplasm. The enzyme catalyses tRNA(Val) + L-valine + ATP = L-valyl-tRNA(Val) + AMP + diphosphate. In terms of biological role, catalyzes the attachment of valine to tRNA(Val). As ValRS can inadvertently accommodate and process structurally similar amino acids such as threonine, to avoid such errors, it has a 'posttransfer' editing activity that hydrolyzes mischarged Thr-tRNA(Val) in a tRNA-dependent manner. The polypeptide is Valine--tRNA ligase (Mycobacterium tuberculosis (strain CDC 1551 / Oshkosh)).